Here is a 448-residue protein sequence, read N- to C-terminus: Probable glycine dehydrogenase (decarboxylating) subunit 1 (448 aa).

Belongs to the GcvP family. N-terminal subunit subfamily. In terms of assembly, the glycine cleavage system is composed of four proteins: P, T, L and H. In this organism, the P 'protein' is a heterodimer of two subunits.

The enzyme catalyses N(6)-[(R)-lipoyl]-L-lysyl-[glycine-cleavage complex H protein] + glycine + H(+) = N(6)-[(R)-S(8)-aminomethyldihydrolipoyl]-L-lysyl-[glycine-cleavage complex H protein] + CO2. The glycine cleavage system catalyzes the degradation of glycine. The P protein binds the alpha-amino group of glycine through its pyridoxal phosphate cofactor; CO(2) is released and the remaining methylamine moiety is then transferred to the lipoamide cofactor of the H protein. This is Probable glycine dehydrogenase (decarboxylating) subunit 1 from Pyrococcus furiosus (strain ATCC 43587 / DSM 3638 / JCM 8422 / Vc1).